The chain runs to 249 residues: Metallo-beta-lactamase type 2 (249 aa).

The N-terminal stretch at 1 to 22 is a signal peptide; that stretch reads MLKRLKGLLVLALGFTGLQVFG. Zn(2+)-binding residues include H98, H100, D102, H161, and C180. A substrate-binding site is contributed by K183. Position 222 (H222) interacts with Zn(2+).

The protein belongs to the metallo-beta-lactamase superfamily. Class-B beta-lactamase family. Monomer. Requires Zn(2+) as cofactor.

The protein localises to the periplasm. It catalyses the reaction a beta-lactam + H2O = a substituted beta-amino acid. Its function is as follows. Confers resistance to the different beta-lactams antibiotics (penicillin, cephalosporin and carbapenem) via the hydrolysis of the beta-lactam ring. The polypeptide is Metallo-beta-lactamase type 2 (blaB5) (Elizabethkingia meningoseptica (Chryseobacterium meningosepticum)).